A 429-amino-acid polypeptide reads, in one-letter code: UDP-N-acetylglucosamine 1-carboxyvinyltransferase (429 aa).

Residue 22–23 coordinates phosphoenolpyruvate; the sequence is KN. R102 serves as a coordination point for UDP-N-acetyl-alpha-D-glucosamine. C126 acts as the Proton donor in catalysis. A 2-(S-cysteinyl)pyruvic acid O-phosphothioketal modification is found at C126. UDP-N-acetyl-alpha-D-glucosamine contacts are provided by residues 131-135, D316, and I338; that span reads RPVDL.

Belongs to the EPSP synthase family. MurA subfamily.

It is found in the cytoplasm. It carries out the reaction phosphoenolpyruvate + UDP-N-acetyl-alpha-D-glucosamine = UDP-N-acetyl-3-O-(1-carboxyvinyl)-alpha-D-glucosamine + phosphate. It participates in cell wall biogenesis; peptidoglycan biosynthesis. In terms of biological role, cell wall formation. Adds enolpyruvyl to UDP-N-acetylglucosamine. The polypeptide is UDP-N-acetylglucosamine 1-carboxyvinyltransferase (Methylobacterium sp. (strain 4-46)).